Consider the following 476-residue polypeptide: MKMSLDKLYEVIDKKKDEFVTRLSRAVSIPSVSADVTLRPKVVEMADFVVSEFTKLGAKMEKRDIGYHQMDGQDVPLPPIVLGQYGNDPSKKTVLIYNHFDVQPASLEDGWSTDPFTLTVDNKGRMFGRGATDDKGPLIGWISAIEAHKELGIDFPVNLLMCFEGMEEYGSEGLEDLIRAEAEKYFAKADCVCISDTYWLGTKKPVLTYGLRGVCYFNITVEGPSADLHSGVFGGTVHEPMTDLVAIMSTLVKPNGEILIPGIMDQVAELTPTEDSIYDGIDYTMEDLKEAVGADISIYPDPKRTLQHRWRYPTLSLHGIEGAFSGSGAKTVIPAKVIGKFSIRTVPNMESETVERLVKEHVTKVFNSLNSKNKLAFNNMHSGSWWISSPDHWHYDVGKKATERVYGITPDFVREGGSIPVTVTFEQSLKKNVLLLPMGRGDDGAHSINEKLDLDNFLKGIKLFCTYVHELASVSP.

H99 contacts Zn(2+). The active site involves D101. Residue D133 participates in Zn(2+) binding. Catalysis depends on E167, which acts as the Proton acceptor. Positions 168, 196, and 446 each coordinate Zn(2+).

It belongs to the peptidase M20A family. As to quaternary structure, homodimer. Component of the GSH degradosomal complex. Zn(2+) serves as cofactor. The cofactor is Mn(2+).

It localises to the cytoplasm. Functionally, catalytic component of the GSH degradosomal complex involved in the degradation of glutathione (GSH) and other peptides containing a gamma-glu-X bond. Has a Gly-Cys dipeptidase activity. This is Cys-Gly metallodipeptidase dug1 (dug1) from Schizosaccharomyces pombe (strain 972 / ATCC 24843) (Fission yeast).